We begin with the raw amino-acid sequence, 299 residues long: tRNA dimethylallyltransferase (299 aa).

An ATP-binding site is contributed by 5–12; that stretch reads GPTASGKT. A substrate-binding site is contributed by 7 to 12; that stretch reads TASGKT. Interaction with substrate tRNA regions lie at residues 30-33, 154-158, and 235-240; these read DSAL, QRLSR, and RCVGYR.

It belongs to the IPP transferase family. In terms of assembly, monomer. Mg(2+) serves as cofactor.

It carries out the reaction adenosine(37) in tRNA + dimethylallyl diphosphate = N(6)-dimethylallyladenosine(37) in tRNA + diphosphate. Its function is as follows. Catalyzes the transfer of a dimethylallyl group onto the adenine at position 37 in tRNAs that read codons beginning with uridine, leading to the formation of N6-(dimethylallyl)adenosine (i(6)A). In Shewanella denitrificans (strain OS217 / ATCC BAA-1090 / DSM 15013), this protein is tRNA dimethylallyltransferase.